Consider the following 134-residue polypeptide: MTLNIRIIAPDRTVWDAEAQEIILPSSTGQLGILTGHAPLLTALDIGVMRVRVDKEWMPIVLLGGFAEIENNQLTILVNGAEEASQIDLVEAEKNLDTATQLLNDASSSKEKIEATQNIRKARARVQAATAASA.

It belongs to the ATPase epsilon chain family. In terms of assembly, F-type ATPases have 2 components, CF(1) - the catalytic core - and CF(0) - the membrane proton channel. CF(1) has five subunits: alpha(3), beta(3), gamma(1), delta(1), epsilon(1). CF(0) has three main subunits: a, b and c.

It localises to the plastid. Its subcellular location is the chloroplast thylakoid membrane. In terms of biological role, produces ATP from ADP in the presence of a proton gradient across the membrane. This chain is ATP synthase epsilon chain, chloroplastic, found in Porphyra purpurea (Red seaweed).